Reading from the N-terminus, the 559-residue chain is Potassium-transporting ATPase potassium-binding subunit (559 aa).

12 consecutive transmembrane segments (helical) span residues phenylalanine 6–valine 26, leucine 63–leucine 83, valine 131–leucine 151, isoleucine 173–glycine 193, phenylalanine 253–valine 273, leucine 283–tryptophan 303, phenylalanine 327–valine 347, alanine 356–valine 376, glycine 379–glycine 399, leucine 416–leucine 436, leucine 484–alanine 504, and glycine 524–isoleucine 544.

Belongs to the KdpA family. In terms of assembly, the system is composed of three essential subunits: KdpA, KdpB and KdpC.

The protein resides in the cell inner membrane. Its function is as follows. Part of the high-affinity ATP-driven potassium transport (or Kdp) system, which catalyzes the hydrolysis of ATP coupled with the electrogenic transport of potassium into the cytoplasm. This subunit binds the periplasmic potassium ions and delivers the ions to the membrane domain of KdpB through an intramembrane tunnel. The sequence is that of Potassium-transporting ATPase potassium-binding subunit from Enterobacter sp. (strain 638).